Consider the following 128-residue polypeptide: Large ribosomal subunit protein bL12 (128 aa).

Belongs to the bacterial ribosomal protein bL12 family. In terms of assembly, homodimer. Part of the ribosomal stalk of the 50S ribosomal subunit. Forms a multimeric L10(L12)X complex, where L10 forms an elongated spine to which 2 to 4 L12 dimers bind in a sequential fashion. Binds GTP-bound translation factors.

In terms of biological role, forms part of the ribosomal stalk which helps the ribosome interact with GTP-bound translation factors. Is thus essential for accurate translation. The polypeptide is Large ribosomal subunit protein bL12 (Kosmotoga olearia (strain ATCC BAA-1733 / DSM 21960 / TBF 19.5.1)).